The sequence spans 383 residues: Na(+)/H(+) antiporter (383 aa).

The next 12 membrane-spanning stretches (helical) occupy residues 1–21 (MEFI…SHIS), 24–44 (FGIP…QAGL), 51–71 (ILVH…AGLE), 83–103 (PGMF…WLTG), 112–132 (EAIF…VEVL), 145–165 (TILG…SFSL), 186–206 (LFYF…LMSL), 216–236 (IIIM…LIGL), 262–282 (VEAL…GLEV), 291–311 (ILFI…GGYI), 323–343 (ALMV…ILQI), and 353–373 (HYYS…PLIL).

This sequence belongs to the monovalent cation:proton antiporter 2 (CPA2) transporter (TC 2.A.37) family.

It localises to the cell membrane. In terms of biological role, na(+)/H(+) antiporter that extrudes sodium in exchange for external protons. Can also transport lithium. The chain is Na(+)/H(+) antiporter (napA) from Enterococcus hirae.